We begin with the raw amino-acid sequence, 440 residues long: Enolase 1-2 (440 aa).

Substrate contacts are provided by histidine 160 and glutamate 169. Residue glutamate 212 is the Proton donor of the active site. Aspartate 247, glutamate 296, and aspartate 321 together coordinate Mg(2+). Residues glutamate 296 and aspartate 321 each contribute to the substrate site. Lysine 346 serves as the catalytic Proton acceptor. Residues 373–376 and lysine 397 contribute to the substrate site; that span reads SHRS.

Belongs to the enolase family. In terms of assembly, homodimer. The cofactor is Mg(2+).

Its subcellular location is the cytoplasm. It carries out the reaction (2R)-2-phosphoglycerate = phosphoenolpyruvate + H2O. It participates in carbohydrate degradation; glycolysis; pyruvate from D-glyceraldehyde 3-phosphate: step 4/5. This chain is Enolase 1-2 (eno102), found in Schizosaccharomyces pombe (strain 972 / ATCC 24843) (Fission yeast).